Consider the following 140-residue polypeptide: ATP synthase epsilon chain (140 aa).

The protein belongs to the ATPase epsilon chain family. As to quaternary structure, F-type ATPases have 2 components, CF(1) - the catalytic core - and CF(0) - the membrane proton channel. CF(1) has five subunits: alpha(3), beta(3), gamma(1), delta(1), epsilon(1). CF(0) has three main subunits: a, b and c.

The protein resides in the cell inner membrane. Its function is as follows. Produces ATP from ADP in the presence of a proton gradient across the membrane. The chain is ATP synthase epsilon chain from Herminiimonas arsenicoxydans.